Here is a 156-residue protein sequence, read N- to C-terminus: Probable cyclic pyranopterin monophosphate synthase (156 aa).

Residues 73–75 (LCH) and 109–110 (ME) contribute to the substrate site. Asp124 is a catalytic residue.

This sequence belongs to the MoaC family. In terms of assembly, homohexamer; trimer of dimers.

It catalyses the reaction (8S)-3',8-cyclo-7,8-dihydroguanosine 5'-triphosphate = cyclic pyranopterin phosphate + diphosphate. The protein operates within cofactor biosynthesis; molybdopterin biosynthesis. Functionally, catalyzes the conversion of (8S)-3',8-cyclo-7,8-dihydroguanosine 5'-triphosphate to cyclic pyranopterin monophosphate (cPMP). The polypeptide is Probable cyclic pyranopterin monophosphate synthase (Pyrococcus furiosus (strain ATCC 43587 / DSM 3638 / JCM 8422 / Vc1)).